The sequence spans 42 residues: Potassium channel toxin gamma-KTx 3.4 (42 aa).

4 disulfides stabilise this stretch: Cys5–Cys23, Cys11–Cys34, Cys20–Cys39, and Cys24–Cys41.

The protein belongs to the ergtoxin family. Gamma-KTx 3 subfamily. As to expression, expressed by the venom gland.

It is found in the secreted. Functionally, blocks Kv11/ERG potassium channels. This Centruroides gracilis (Slenderbrown scorpion) protein is Potassium channel toxin gamma-KTx 3.4.